A 307-amino-acid polypeptide reads, in one-letter code: Transaldolase (307 aa).

Residue K125 is the Schiff-base intermediate with substrate of the active site.

Belongs to the transaldolase family. Type 1 subfamily. Homodimer.

Its subcellular location is the cytoplasm. It catalyses the reaction D-sedoheptulose 7-phosphate + D-glyceraldehyde 3-phosphate = D-erythrose 4-phosphate + beta-D-fructose 6-phosphate. The protein operates within carbohydrate degradation; pentose phosphate pathway; D-glyceraldehyde 3-phosphate and beta-D-fructose 6-phosphate from D-ribose 5-phosphate and D-xylulose 5-phosphate (non-oxidative stage): step 2/3. Its function is as follows. Transaldolase is important for the balance of metabolites in the pentose-phosphate pathway. The chain is Transaldolase from Pseudomonas paraeruginosa (strain DSM 24068 / PA7) (Pseudomonas aeruginosa (strain PA7)).